The chain runs to 363 residues: D-alanine--D-alanine ligase (363 aa).

The region spanning 146–352 (KLCAADAGVA…FTALIDKLLH (207 aa)) is the ATP-grasp domain. Residue 179-234 (DSTFGYPLFVKPASLGSSVGISKVHLPAALPEALKVACSYDRKILVEAAVSGKEIE) participates in ATP binding. Mg(2+) is bound by residues Asp305, Glu319, and Asn321.

Belongs to the D-alanine--D-alanine ligase family. The cofactor is Mg(2+). It depends on Mn(2+) as a cofactor.

The protein resides in the cytoplasm. It catalyses the reaction 2 D-alanine + ATP = D-alanyl-D-alanine + ADP + phosphate + H(+). It participates in cell wall biogenesis; peptidoglycan biosynthesis. In terms of biological role, cell wall formation. This chain is D-alanine--D-alanine ligase, found in Chlorobium limicola (strain DSM 245 / NBRC 103803 / 6330).